Here is a 511-residue protein sequence, read N- to C-terminus: Maturase K (511 aa).

It belongs to the intron maturase 2 family. MatK subfamily.

It is found in the plastid. It localises to the chloroplast. Its function is as follows. Usually encoded in the trnK tRNA gene intron. Probably assists in splicing its own and other chloroplast group II introns. The sequence is that of Maturase K from Bromus inermis (Smooth brome grass).